We begin with the raw amino-acid sequence, 1165 residues long: DNA-directed RNA polymerase subunit beta (1165 aa).

This sequence belongs to the RNA polymerase beta chain family. As to quaternary structure, the RNAP catalytic core consists of 2 alpha, 1 beta, 1 beta' and 1 omega subunit. When a sigma factor is associated with the core the holoenzyme is formed, which can initiate transcription.

It carries out the reaction RNA(n) + a ribonucleoside 5'-triphosphate = RNA(n+1) + diphosphate. Functionally, DNA-dependent RNA polymerase catalyzes the transcription of DNA into RNA using the four ribonucleoside triphosphates as substrates. The sequence is that of DNA-directed RNA polymerase subunit beta from Corynebacterium glutamicum (strain R).